The following is a 162-amino-acid chain: Ribosome maturation factor RimP (162 aa).

The protein belongs to the RimP family.

The protein resides in the cytoplasm. Required for maturation of 30S ribosomal subunits. The chain is Ribosome maturation factor RimP from Leptospira interrogans serogroup Icterohaemorrhagiae serovar copenhageni (strain Fiocruz L1-130).